A 254-amino-acid polypeptide reads, in one-letter code: Germin-like protein 4-1 (254 aa).

The signal sequence occupies residues 1-27; sequence MASRAFAAVFAAVALVVCSSVLPRALA. Cysteines 37 and 52 form a disulfide. The 154-residue stretch at 67–220 folds into the Cupin type-1 domain; the sequence is KALGVPGNTV…AFMIDKDQVD (154 aa). The Mn(2+) site is built by histidine 115, histidine 117, glutamate 122, and histidine 166.

This sequence belongs to the germin family. In terms of assembly, oligomer (believed to be a pentamer but probably hexamer).

It is found in the secreted. Its subcellular location is the extracellular space. It localises to the apoplast. In terms of biological role, may play a role in plant defense. Probably has no oxalate oxidase activity even if the active site is conserved. The sequence is that of Germin-like protein 4-1 from Oryza sativa subsp. japonica (Rice).